A 181-amino-acid chain; its full sequence is Keratin-associated protein 4-5 (181 aa).

Repeat copies occupy residues 5–9 (CCGSV), 20–24 (CCRPS), 25–29 (CCQTT), 30–34 (CCRTT), 35–39 (CCRPS), 40–44 (CCKPQ), 45–49 (CCQSV), 55–59 (CCHPS), 60–64 (CCISS), 65–69 (CCRPY), 70–74 (CCESS), 75–79 (CCRPC), 80–84 (CCQTT), 85–89 (CCRTT), 90–94 (CCRTT), 95–99 (CCCPS), 100–104 (CCVSS), 105–109 (CCRPQ), 110–114 (CCQSV), 115–119 (CCQPT), 120–124 (CCRPS), 125–129 (CCISS), 130–134 (CCHPS), 135–139 (CCESS), 140–144 (CCRPC), and 145–149 (CCVRP). The segment at 5-154 (CCGSVSSEQS…CCVRPVCGRV (150 aa)) is 26 X 5 AA repeats of C-C-[GRQVCHIEK]-[SPTR]-[VSTQYC].

It belongs to the KRTAP type 4 family. Interacts with hair keratins. As to expression, expressed in the hair follicles.

In the hair cortex, hair keratin intermediate filaments are embedded in an interfilamentous matrix, consisting of hair keratin-associated proteins (KRTAP), which are essential for the formation of a rigid and resistant hair shaft through their extensive disulfide bond cross-linking with abundant cysteine residues of hair keratins. The matrix proteins include the high-sulfur and high-glycine-tyrosine keratins. This Homo sapiens (Human) protein is Keratin-associated protein 4-5 (KRTAP4-5).